Consider the following 402-residue polypeptide: Arabinosyltransferase RRA1 (402 aa).

The Cytoplasmic segment spans residues 1–13 (MAVRKEKVQPFRE). Residues 14–34 (CGIAIAVLVGIFIGCVCTILI) form a helical; Signal-anchor for type II membrane protein membrane-spanning segment. Over 35–402 (PNDFVNFRSS…DALDRFRDGS (368 aa)) the chain is Lumenal. The DXD motif motif lies at 225–227 (DVD). N-linked (GlcNAc...) asparagine glycosylation occurs at Asn253.

The protein belongs to the glycosyltransferase 77 family. In terms of tissue distribution, expressed in leaf meristem and at points of cauline leaf attachments on the primary stem. Expressed at low levels in siliques.

The protein resides in the golgi apparatus membrane. In terms of biological role, plays a role in the arabinosylation of cell wall components. Involved in the arabinosylation of extensin proteins in root hair cells. Extensins are structural glycoproteins present in cell walls and its arabinosylation is important for root hair cell development. The sequence is that of Arabinosyltransferase RRA1 from Arabidopsis thaliana (Mouse-ear cress).